Here is a 267-residue protein sequence, read N- to C-terminus: Membrane-spanning 4-domains subfamily A member 10 (267 aa).

Over 1–56 (MAGQAPTAVPGSVTGEVSRWQNLGPAQPAQKVAQPQNLVPDGHLEKALEGSDLLQK) the chain is Cytoplasmic. The chain crosses the membrane as a helical span at residues 57 to 77 (LGGFHIAIAFAHLAFGGYLIS). Topologically, residues 78–83 (TVKNLH) are extracellular. A helical membrane pass occupies residues 84 to 104 (LVVLKCWYPLWGTVSFLVAGM). Topologically, residues 105–118 (AAMTTVTFPKTSLK) are cytoplasmic. A helical membrane pass occupies residues 119 to 139 (VLCVIANVISLFCALAGFFVI). The Extracellular segment spans residues 140-168 (AKDLFLEGPFPWPIWRPYPEPTTYIQRLE). A helical transmembrane segment spans residues 169 to 189 (LTLFCFTFLEIFLSGSTAITA). Residues 190–267 (YRMKRLQAED…LHTGPRTLRK (78 aa)) lie on the Cytoplasmic side of the membrane.

It belongs to the MS4A family. Expressed in thymus, kidney, colon, brain and testis. Expressed also by various hematopoietic and lymphoblastoid cell lines.

The protein resides in the membrane. In terms of biological role, may be involved in signal transduction as a component of a multimeric receptor complex. The polypeptide is Membrane-spanning 4-domains subfamily A member 10 (Ms4a10) (Mus musculus (Mouse)).